Consider the following 357-residue polypeptide: Peptide chain release factor 1 (357 aa).

Q233 bears the N5-methylglutamine mark.

It belongs to the prokaryotic/mitochondrial release factor family. In terms of processing, methylated by PrmC. Methylation increases the termination efficiency of RF1.

It is found in the cytoplasm. Peptide chain release factor 1 directs the termination of translation in response to the peptide chain termination codons UAG and UAA. This is Peptide chain release factor 1 from Flavobacterium psychrophilum (strain ATCC 49511 / DSM 21280 / CIP 103535 / JIP02/86).